The following is a 406-amino-acid chain: Tryptophan synthase beta chain (406 aa).

Lys-99 bears the N6-(pyridoxal phosphate)lysine mark.

The protein belongs to the TrpB family. Tetramer of two alpha and two beta chains. Pyridoxal 5'-phosphate is required as a cofactor.

The enzyme catalyses (1S,2R)-1-C-(indol-3-yl)glycerol 3-phosphate + L-serine = D-glyceraldehyde 3-phosphate + L-tryptophan + H2O. Its pathway is amino-acid biosynthesis; L-tryptophan biosynthesis; L-tryptophan from chorismate: step 5/5. Its function is as follows. The beta subunit is responsible for the synthesis of L-tryptophan from indole and L-serine. This Methylobacterium sp. (strain 4-46) protein is Tryptophan synthase beta chain.